The primary structure comprises 77 residues: Translational regulator CsrA (77 aa).

This sequence belongs to the CsrA/RsmA family. In terms of assembly, homodimer; the beta-strands of each monomer intercalate to form a hydrophobic core, while the alpha-helices form wings that extend away from the core.

Its subcellular location is the cytoplasm. A translational regulator that binds mRNA to regulate translation initiation and/or mRNA stability. Usually binds in the 5'-UTR at or near the Shine-Dalgarno sequence preventing ribosome-binding, thus repressing translation. Its main target seems to be the major flagellin gene, while its function is anatagonized by FliW. This is Translational regulator CsrA from Desulfitobacterium hafniense (strain Y51).